The sequence spans 219 residues: Large ribosomal subunit protein uL3 (219 aa).

This sequence belongs to the universal ribosomal protein uL3 family. Part of the 50S ribosomal subunit. Forms a cluster with proteins L14 and L19.

One of the primary rRNA binding proteins, it binds directly near the 3'-end of the 23S rRNA, where it nucleates assembly of the 50S subunit. This is Large ribosomal subunit protein uL3 from Corynebacterium kroppenstedtii (strain DSM 44385 / JCM 11950 / CIP 105744 / CCUG 35717).